The chain runs to 152 residues: 3-hydroxyacyl-[acyl-carrier-protein] dehydratase FabZ (152 aa).

His-58 is a catalytic residue.

The protein belongs to the thioester dehydratase family. FabZ subfamily.

It localises to the cytoplasm. It catalyses the reaction a (3R)-hydroxyacyl-[ACP] = a (2E)-enoyl-[ACP] + H2O. Functionally, involved in unsaturated fatty acids biosynthesis. Catalyzes the dehydration of short chain beta-hydroxyacyl-ACPs and long chain saturated and unsaturated beta-hydroxyacyl-ACPs. This chain is 3-hydroxyacyl-[acyl-carrier-protein] dehydratase FabZ, found in Prochlorococcus marinus (strain MIT 9301).